The sequence spans 299 residues: Apolipoprotein E (299 aa).

The N-terminal stretch at 1–18 is a signal peptide; it reads MKVLCTVLVVTLLAGCRA. A run of 7 repeats spans residues 74-95, 96-117, 118-139, 140-161, 162-183, 184-205, and 224-245. The 8 X 22 AA approximate tandem repeats stretch occupies residues 74–245; sequence VLMEDTMKAV…RLEEMREQME (172 aa). Met137 is modified (methionine sulfoxide). Ser141 is modified (phosphoserine). The tract at residues 152-162 is LDL and other lipoprotein receptors binding; that stretch reads HLRKLRKRMLR. Heparin is bound at residue 156–159; that stretch reads LRKR. The lipid-binding and lipoprotein association stretch occupies residues 204 to 273; that stretch reads AALTGQPLQE…GWFEPMVEDM (70 aa). A heparin-binding site is contributed by 219–226; that stretch reads GKQLRGRL. The segment at 261 to 273 is specificity for association with VLDL; sequence RLKGWFEPMVEDM.

Belongs to the apolipoprotein A1/A4/E family. As to quaternary structure, homotetramer. May interact with ABCA1; functionally associated with ABCA1 in the biogenesis of HDLs. May interact with APP/A4 amyloid-beta peptide; the interaction is extremely stable in vitro but its physiological significance is unclear. May interact with MAPT. May interact with MAP2. In the cerebrospinal fluid, interacts with secreted SORL1. Interacts with PMEL; this allows the loading of PMEL luminal fragment on ILVs to induce fibril nucleation. APOE exists as multiple glycosylated and sialylated glycoforms within cells and in plasma. The extent of glycosylation and sialylation are tissue and context specific. Post-translationally, glycated in plasma VLDL. In terms of processing, phosphorylated by FAM20C in the extracellular medium.

The protein resides in the secreted. It is found in the extracellular space. It localises to the extracellular matrix. The protein localises to the extracellular vesicle. Its subcellular location is the endosome. The protein resides in the multivesicular body. Functionally, APOE is an apolipoprotein, a protein associating with lipid particles, that mainly functions in lipoprotein-mediated lipid transport between organs via the plasma and interstitial fluids. APOE is a core component of plasma lipoproteins and is involved in their production, conversion and clearance. Apolipoproteins are amphipathic molecules that interact both with lipids of the lipoprotein particle core and the aqueous environment of the plasma. As such, APOE associates with chylomicrons, chylomicron remnants, very low density lipoproteins (VLDL) and intermediate density lipoproteins (IDL) but shows a preferential binding to high-density lipoproteins (HDL). It also binds a wide range of cellular receptors including the LDL receptor/LDLR, the LDL receptor-related proteins LRP1, LRP2 and LRP8 and the very low-density lipoprotein receptor/VLDLR that mediate the cellular uptake of the APOE-containing lipoprotein particles. Finally, APOE also has a heparin-binding activity and binds heparan-sulfate proteoglycans on the surface of cells, a property that supports the capture and the receptor-mediated uptake of APOE-containing lipoproteins by cells. A main function of APOE is to mediate lipoprotein clearance through the uptake of chylomicrons, VLDLs, and HDLs by hepatocytes. APOE is also involved in the biosynthesis by the liver of VLDLs as well as their uptake by peripheral tissues ensuring the delivery of triglycerides and energy storage in muscle, heart and adipose tissues. By participating in the lipoprotein-mediated distribution of lipids among tissues, APOE plays a critical role in plasma and tissues lipid homeostasis. APOE is also involved in two steps of reverse cholesterol transport, the HDLs-mediated transport of cholesterol from peripheral tissues to the liver, and thereby plays an important role in cholesterol homeostasis. First, it is functionally associated with ABCA1 in the biogenesis of HDLs in tissues. Second, it is enriched in circulating HDLs and mediates their uptake by hepatocytes. APOE also plays an important role in lipid transport in the central nervous system, regulating neuron survival and sprouting. The chain is Apolipoprotein E (APOE) from Octodon degus (Degu).